We begin with the raw amino-acid sequence, 511 residues long: MVEQIMIQGTASDAGKSILVAGLCRLFKNKGKRVVPFKSQNMSLNSFITATGDEMGRAQVFQAEAAGVFPDVRMNPVLLKPTNDRQSQVVFMGSILDNMDAVTYHDFKQTLISKIQAVYQSLADENDIIVLEGAGSPAEINLNDRDIVNMGMAKMVDAPVVLVADIDKGGVFASIYGTIMLLNEEESARIKGVIINKFRGDVALLQPGIDMIEELTKVPVIGVIPYANLKLEEEDSVSLSGKNYVPNSSALLDIAIICLPRISNFTDFHVLEIQPDISLRYIRNLAEFGNPDLVIIPGSKNTLEDMAFLEKSGLKKAIQHYAEKAGKVIGICGGYQMLGKKMLDPNQVESEQIEISGLGLLDTETIFLNQKRTTQITGVTLSGEPVEGYEIHMGQTKRGESTSPFCEIKAVNGNQETHQDGAVSTNKNIIGTYIHGIFDNDIFLGNLFNELLTLKNKTVYPHEIIQLKEHKEQEYDKLAALLEENIQMDQLEKIMKGEKICVSTQKPVIKE.

A GATase cobBQ-type domain is found at 251–443 (LLDIAIICLP…IHGIFDNDIF (193 aa)). The Nucleophile role is filled by cysteine 332. Histidine 435 is an active-site residue.

The protein belongs to the CobB/CobQ family. CobQ subfamily.

The protein operates within cofactor biosynthesis; adenosylcobalamin biosynthesis. Functionally, catalyzes amidations at positions B, D, E, and G on adenosylcobyrinic A,C-diamide. NH(2) groups are provided by glutamine, and one molecule of ATP is hydrogenolyzed for each amidation. This chain is Cobyric acid synthase, found in Listeria welshimeri serovar 6b (strain ATCC 35897 / DSM 20650 / CCUG 15529 / CIP 8149 / NCTC 11857 / SLCC 5334 / V8).